The following is a 259-amino-acid chain: Phosphate import ATP-binding protein PstB (259 aa).

One can recognise an ABC transporter domain in the interval 13 to 254 (LEVNNLNFHY…PRLQRTEDYI (242 aa)). 45-52 (GPSGCGKS) provides a ligand contact to ATP.

This sequence belongs to the ABC transporter superfamily. Phosphate importer (TC 3.A.1.7) family. As to quaternary structure, the complex is composed of two ATP-binding proteins (PstB), two transmembrane proteins (PstC and PstA) and a solute-binding protein (PstS).

The protein resides in the cell inner membrane. The enzyme catalyses phosphate(out) + ATP + H2O = ADP + 2 phosphate(in) + H(+). Its function is as follows. Part of the ABC transporter complex PstSACB involved in phosphate import. Responsible for energy coupling to the transport system. In Pasteurella multocida (strain Pm70), this protein is Phosphate import ATP-binding protein PstB.